The sequence spans 1358 residues: Probable aldehyde oxidase 1 (1358 aa).

The 2Fe-2S ferredoxin-type domain maps to 4-91 (AAAVVAVNGE…HCAVTTSEGI (88 aa)). Positions 43, 48, 51, and 73 each coordinate [2Fe-2S] cluster. One can recognise an FAD-binding PCMH-type domain in the interval 236 to 418 (AVTGDGCWFH…ISISIPDWCS (183 aa)). Positions 540-567 (KPENANNVPNGSCTTNGTTNGSAESTVD) are disordered. Residues 549–561 (NGSCTTNGTTNGS) are compositionally biased toward low complexity.

The protein belongs to the xanthine dehydrogenase family. In terms of assembly, aldehyde oxidases (AO) are homodimers and heterodimers of AO subunits. The cofactor is [2Fe-2S] cluster. Requires FAD as cofactor. Mo-molybdopterin serves as cofactor.

It carries out the reaction an aldehyde + O2 + H2O = a carboxylate + H2O2 + H(+). The chain is Probable aldehyde oxidase 1 from Oryza sativa subsp. japonica (Rice).